A 128-amino-acid chain; its full sequence is 14.7 kDa protein (128 aa).

The C4-type zinc finger occupies 65–94; sequence CFDCGAYLYDDHVCKRFTSRSNSDCLSVIH.

Functionally, may act as a regulatory factor during viral transcription. This is 14.7 kDa protein from Shallot virus X (ShVX).